A 121-amino-acid chain; its full sequence is Protein yippee (121 aa).

The region spanning K13–E110 is the Yippee domain. Residues C17, C20, C73, and C76 each contribute to the Zn(2+) site.

This sequence belongs to the yippee family. Interacts with hemolin.

In Drosophila melanogaster (Fruit fly), this protein is Protein yippee.